The sequence spans 83 residues: Cytochrome c-554(548) (83 aa).

4 residues coordinate heme c: Cys14, Cys17, His18, and Met63.

In terms of assembly, homodimer. Binds 1 heme c group covalently per subunit.

The protein is Cytochrome c-554(548) of Halomonas halodenitrificans (strain ATCC 12084 / NCIMB 8669) (Paracoccus halodenitrificans).